The sequence spans 305 residues: tRNA uridine(34) hydroxylase (305 aa).

Residues 126 to 220 (CDPEVTVIDT…YLEEVPAQES (95 aa)) enclose the Rhodanese domain. Cys-180 serves as the catalytic Cysteine persulfide intermediate.

It belongs to the TrhO family.

The catalysed reaction is uridine(34) in tRNA + AH2 + O2 = 5-hydroxyuridine(34) in tRNA + A + H2O. Catalyzes oxygen-dependent 5-hydroxyuridine (ho5U) modification at position 34 in tRNAs. The polypeptide is tRNA uridine(34) hydroxylase (Nostoc punctiforme (strain ATCC 29133 / PCC 73102)).